Reading from the N-terminus, the 278-residue chain is Complement C1q tumor necrosis factor-related protein 6 (278 aa).

Residues 1-46 (MQWLRVRESPGEATGHRVTMGTAALGPVWAALLLFLLMCEIPMVEL) form the signal peptide. N-linked (GlcNAc...) asparagine glycosylation is present at N91. A Collagen-like domain is found at 97–138 (GDKGDPGPMGLPGYMGREGPQGEPGPQGSKGDKGEMGSPGAP). The disordered stretch occupies residues 99-135 (KGDPGPMGLPGYMGREGPQGEPGPQGSKGDKGEMGSP). Residues 139-259 (CQKRFFAFSV…KRQRENAIYS (121 aa)) form the C1q domain.

The protein resides in the secreted. This is Complement C1q tumor necrosis factor-related protein 6 (C1QTNF6) from Homo sapiens (Human).